Consider the following 299-residue polypeptide: Nucleophosmin (299 aa).

Acidic residues predominate over residues 125-134 (ESSDDEDEEH). The tract at residues 125 to 247 (ESSDDEDEEH…TPKTPLSSEE (123 aa)) is disordered. The Nuclear localization signal signature appears at 153-158 (PRKKTR). Residues 160 to 187 (EEEEEDSDEDDDDDEDDDDEDDDEEEEE) show a composition bias toward acidic residues. Positions 188 to 197 (TPVKKTDSTK) are enriched in basic and acidic residues. The short motif at 189-195 (PVKKTDS) is the Nuclear localization signal element. Repeats lie at residues 218–220 (KTP), 221–223 (KTP), 237–239 (KTP), and 240–242 (KTP). A 4 X 3 AA repeats of K-T-P region spans residues 218 to 242 (KTPKTPEQKGKQDTKPQTPKTPKTP). Residues 221–231 (KTPEQKGKQDT) are compositionally biased toward basic and acidic residues. Residues 232 to 242 (KPQTPKTPKTP) show a composition bias toward low complexity.

It belongs to the nucleoplasmin family. As to quaternary structure, decamer formed by two pentameric rings associated in a head-to-head fashion. In terms of processing, phosphorylated.

The protein resides in the cytoplasm. Its subcellular location is the nucleus. The protein localises to the nucleoplasm. It is found in the nucleolus. In terms of biological role, acts as a chaperonin for the core histones H3, H2B and H4. Associated with nucleolar ribonucleoprotein structures and bind single-stranded nucleic acids. It may function in the assembly and/or transport of ribosome. May stimulate endonuclease activity on apurinic/apyrimidinic (AP) double-stranded DNA. May inhibit endonuclease activity on AP single-stranded RNA. The polypeptide is Nucleophosmin (npm1) (Xenopus laevis (African clawed frog)).